The following is a 288-amino-acid chain: Cyclin-dependent kinase 2 homolog (288 aa).

A Protein kinase domain is found at 4–284 (YHGLEKIGEG…AKQAIEHPYF (281 aa)). Residues 10-18 (IGEGTYGVV) and lysine 32 contribute to the ATP site. Phosphothreonine is present on threonine 14. At tyrosine 15 the chain carries Phosphotyrosine. Residue aspartate 125 is the Proton acceptor of the active site. Threonine 158 bears the Phosphothreonine mark.

Belongs to the protein kinase superfamily. CMGC Ser/Thr protein kinase family. CDC2/CDKX subfamily. In terms of assembly, may form a complex composed of at least the catalytic subunit CRK2 and a cyclin. The cofactor is Mg(2+).

The protein resides in the cytoplasm. The enzyme catalyses L-seryl-[protein] + ATP = O-phospho-L-seryl-[protein] + ADP + H(+). It catalyses the reaction L-threonyl-[protein] + ATP = O-phospho-L-threonyl-[protein] + ADP + H(+). It carries out the reaction [DNA-directed RNA polymerase] + ATP = phospho-[DNA-directed RNA polymerase] + ADP + H(+). Phosphorylation at Thr-14 or Tyr-15 inactivates the enzyme, while phosphorylation at Thr-158 activates it. Its function is as follows. Serine/threonine-protein kinase. Involved in the control of the cell cycle. Required for entry into S-phase and mitosis. Probable component of the kinase complex that phosphorylates the repetitive C-terminus of RNA polymerase II. This chain is Cyclin-dependent kinase 2 homolog, found in Plasmodium chabaudi chabaudi.